The chain runs to 321 residues: Phospho-N-acetylmuramoyl-pentapeptide-transferase (321 aa).

Transmembrane regions (helical) follow at residues Met1–Ile21, Met50–Val70, Ile76–Ile96, Phe112–Val132, Ile140–Trp160, Gly176–Leu196, Ala200–Leu220, Val225–Met245, Leu250–Val270, and Val300–Val320.

The protein belongs to the glycosyltransferase 4 family. MraY subfamily. Requires Mg(2+) as cofactor.

It is found in the cell membrane. It carries out the reaction UDP-N-acetyl-alpha-D-muramoyl-L-alanyl-gamma-D-glutamyl-L-lysyl-D-alanyl-D-alanine + di-trans,octa-cis-undecaprenyl phosphate = Mur2Ac(oyl-L-Ala-gamma-D-Glu-L-Lys-D-Ala-D-Ala)-di-trans,octa-cis-undecaprenyl diphosphate + UMP. Its pathway is cell wall biogenesis; peptidoglycan biosynthesis. Catalyzes the initial step of the lipid cycle reactions in the biosynthesis of the cell wall peptidoglycan: transfers peptidoglycan precursor phospho-MurNAc-pentapeptide from UDP-MurNAc-pentapeptide onto the lipid carrier undecaprenyl phosphate, yielding undecaprenyl-pyrophosphoryl-MurNAc-pentapeptide, known as lipid I. This is Phospho-N-acetylmuramoyl-pentapeptide-transferase from Staphylococcus epidermidis (strain ATCC 12228 / FDA PCI 1200).